A 130-amino-acid polypeptide reads, in one-letter code: Glycine cleavage system H protein (130 aa).

Positions 23–105 (IGIIGITDFA…YGKGWMIKVE (83 aa)) constitute a Lipoyl-binding domain. Lysine 64 is modified (N6-lipoyllysine).

Belongs to the GcvH family. The glycine cleavage system is composed of four proteins: P, T, L and H. (R)-lipoate serves as cofactor.

Its function is as follows. The glycine cleavage system catalyzes the degradation of glycine. The H protein shuttles the methylamine group of glycine from the P protein to the T protein. This chain is Glycine cleavage system H protein, found in Carboxydothermus hydrogenoformans (strain ATCC BAA-161 / DSM 6008 / Z-2901).